Reading from the N-terminus, the 133-residue chain is L-cystatin (133 aa).

Residues 1 to 19 form the signal peptide; the sequence is MEGYNILAVLIILVGVSMG. Q20 carries the pyrrolidone carboxylic acid modification. The Secondary area of contact signature appears at 67-71; it reads QVVSG. 2 disulfide bridges follow: C85–C98 and C109–C129.

Belongs to the cystatin family. Expressed in hemocytes and slightly in heart.

The protein localises to the cytoplasmic granule. Its function is as follows. Tight-binding inhibitor for papain. It has an important role in the protection of cells, antimicrobial activity against Gram-negative bacteria, defense against invading microbes, and response to external stimuli. This Tachypleus tridentatus (Japanese horseshoe crab) protein is L-cystatin.